Reading from the N-terminus, the 409-residue chain is Galactosylgalactosylxylosylprotein 3-beta-glucuronosyltransferase S (409 aa).

A disordered region spans residues 1–45 (MSSARLLESQTSDEDNEDIERRPHQSHSRSCSNNTTPTHPPHPMV). The Cytoplasmic segment spans residues 1 to 53 (MSSARLLESQTSDEDNEDIERRPHQSHSRSCSNNTTPTHPPHPMVRKGGVARR). Serine 9 is subject to Phosphoserine. Phosphothreonine is present on threonine 11. Phosphoserine occurs at positions 12 and 32. The helical; Signal-anchor for type II membrane protein transmembrane segment at 54-73 (ICLIGGALFLLLVALCYLTL) threads the bilayer. At 74–409 (SGDTRLGGSE…RENPHSKILS (336 aa)) the chain is on the lumenal side. 2 N-linked (GlcNAc...) asparagine glycosylation sites follow: asparagine 102 and asparagine 223. Position 235 (aspartate 235) interacts with Mn(2+). The active-site Proton acceptor is glutamate 318. A glycan (N-linked (GlcNAc...) asparagine) is linked at asparagine 338. The segment at 389–409 (EGRNALISKNGRENPHSKILS) is disordered. The segment covering 398 to 409 (NGRENPHSKILS) has biased composition (basic and acidic residues).

This sequence belongs to the glycosyltransferase 43 family. The cofactor is Mn(2+).

The protein resides in the golgi apparatus membrane. It catalyses the reaction 3-O-(beta-D-galactosyl-(1-&gt;3)-beta-D-galactosyl-(1-&gt;4)-beta-D-xylosyl)-L-seryl-[protein] + UDP-alpha-D-glucuronate = 3-O-(beta-D-GlcA-(1-&gt;3)-beta-D-Gal-(1-&gt;3)-beta-D-Gal-(1-&gt;4)-beta-D-Xyl)-L-seryl-[protein] + UDP + H(+). The protein operates within protein modification; protein glycosylation. Functionally, involved in the biosynthesis of L2/HNK-1 carbohydrate epitope on both glycolipids and glycoproteins. Enzyme has a broad specificity. This Drosophila melanogaster (Fruit fly) protein is Galactosylgalactosylxylosylprotein 3-beta-glucuronosyltransferase S (GlcAT-S).